Consider the following 1029-residue polypeptide: Chitin synthase 3 (1029 aa).

The disordered stretch occupies residues 1-29; that stretch reads MAYYSRPASAGAARAQDDQDPYPYYPDPD. Residue asparagine 37 is glycosylated (N-linked (GlcNAc...) asparagine). Low complexity predominate over residues 46–71; it reads ASGAASSASHTSPFSDAHAASASPAS. Disordered regions lie at residues 46-105 and 168-209; these read ASGA…SRMP and LAHR…AGTS. Positions 76 to 91 are enriched in polar residues; that stretch reads SHQQVSAHAPQQQHMS. A compositionally biased stretch (basic and acidic residues) spans 191 to 202; it reads AHDEKYAYDRPD. Residues asparagine 401, asparagine 514, asparagine 527, and asparagine 689 are each glycosylated (N-linked (GlcNAc...) asparagine). Transmembrane regions (helical) follow at residues 723 to 743, 760 to 780, 796 to 816, 830 to 850, 860 to 880, 963 to 983, and 998 to 1018; these read FYSF…YIFF, IGVF…SSFI, AAVV…VLCL, AQMV…SLLA, FLQY…YAFC, VVLA…NGDA, and VYMV…FIGS.

The protein belongs to the chitin synthase family. Class I subfamily.

The protein localises to the cell membrane. It is found in the cytoplasmic vesicle membrane. It carries out the reaction [(1-&gt;4)-N-acetyl-beta-D-glucosaminyl](n) + UDP-N-acetyl-alpha-D-glucosamine = [(1-&gt;4)-N-acetyl-beta-D-glucosaminyl](n+1) + UDP + H(+). Its function is as follows. Polymerizes chitin, a structural polymer of the cell wall and septum, by transferring the sugar moiety of UDP-GlcNAc to the non-reducing end of the growing chitin polymer. The chain is Chitin synthase 3 from Mycosarcoma maydis (Corn smut fungus).